Consider the following 279-residue polypeptide: Histone chaperone ASF1 (279 aa).

Residues 1–143 form an interaction with HIR1 region; sequence MSIVSLLGIK…HIVRNILAEK (143 aa). The interval 1–155 is interaction with histone H3, histone H4, RAD53 and the RF-C complex; sequence MSIVSLLGIK…VTRFNIVWDN (155 aa). Residues 156 to 279 form a disordered region; that stretch reads ENEGDLYPPE…TPKDAARSTN (124 aa). Over residues 168–244 the composition is skewed to acidic residues; that stretch reads GVDDEEEEDD…DEEEGEEEVG (77 aa). A coiled-coil region spans residues 192–243; sequence DDQEDGEGEAEEAAEEEEEEEEKTEDNETNLEEEEEDIENSDGDEEEGEEEV. Basic and acidic residues-rich tracts occupy residues 245-254 and 269-279; these read SVDKNEDGND and STPKDAARSTN.

It belongs to the ASF1 family. Interacts with histone H3/H4 heterodimers via both histone H3 and histone H4. Binds with higher affinity to H3/H4 heterodimers where histone H3 has been pre-acetylated on 'Lys-14'. Interacts with RAD53 and this may impair interaction with histones and chromatin assembly; the interaction is reduced upon activation of DNA damage or replication checkpoints which in turn promotes histone binding and chromatin assembly. Interacts with the CAC2 subunit of chromatin assembly factor 1 (CAF-1). Interacts with the HIR1, HIR2, HIR3 and HPC2 subunits of the HIR complex. Interacts with the RFC1, RFC2, RFC3, RFC4 and RFC5 subunits of the replication factor C (RF-C/RFC) complex; which may recruit this protein to DNA. Interacts with the SAS2, SAS4 and SAS5 subunits of the SAS/SAS-I complex. Interacts with the BDF1, BDF2, SPT15, TAF1 and TAF7 subunits of the TFIID complex. Interacts with RTT109 and VPS75; the interaction with RTT109 is direct.

It is found in the nucleus. Histone chaperone that facilitates histone deposition and histone exchange and removal during nucleosome assembly and disassembly. Facilitates histone deposition through both replication-dependent and replication-independent chromatin assembly pathways. Cooperates with chromatin assembly factor 1 (CAF-1) to promote replication-dependent chromatin assembly and with the HIR complex to promote replication-independent chromatin assembly, which may occur during transcription and DNA repair. May be required for the maintenance of a subset of replication elongation factors, including DNA polymerase epsilon, the RFC complex and PCNA, at stalled replication forks. Also required for RTT109-dependent acetylation of histone H3 on 'Lys-9' and 'Lys-56'. Promotion of RTT109-mediated histone H3 'Lys-56' acetylation is dependent on interactions with histone H3 pre-acetylated on 'Lys-14'. This is Histone chaperone ASF1 from Saccharomyces cerevisiae (strain ATCC 204508 / S288c) (Baker's yeast).